Reading from the N-terminus, the 105-residue chain is Large ribosomal subunit protein uL24 (105 aa).

It belongs to the universal ribosomal protein uL24 family. In terms of assembly, part of the 50S ribosomal subunit.

One of two assembly initiator proteins, it binds directly to the 5'-end of the 23S rRNA, where it nucleates assembly of the 50S subunit. In terms of biological role, one of the proteins that surrounds the polypeptide exit tunnel on the outside of the subunit. The protein is Large ribosomal subunit protein uL24 of Nitrosomonas europaea (strain ATCC 19718 / CIP 103999 / KCTC 2705 / NBRC 14298).